The chain runs to 369 residues: 1-aminocyclopropane-1-carboxylate oxidase homolog 2 (369 aa).

The Fe2OG dioxygenase domain occupies 217 to 318 (KGLRMLCHYF…VSVACFFHTH (102 aa)). His241, Asp243, and His297 together coordinate Fe cation.

It belongs to the iron/ascorbate-dependent oxidoreductase family. Fe cation serves as cofactor.

This chain is 1-aminocyclopropane-1-carboxylate oxidase homolog 2, found in Arabidopsis thaliana (Mouse-ear cress).